The primary structure comprises 472 residues: 23S rRNA (uracil(1939)-C(5))-methyltransferase RlmD (472 aa).

Positions 1–15 (MSRTAPHRRAPKRYK) are enriched in basic residues. Residues 1–23 (MSRTAPHRRAPKRYKTPPPAPAH) are disordered. The region spanning 23–87 (HVVTGNEPVI…PKFEQAEVVQ (65 aa)) is the TRAM domain. Positions 100, 106, 109, and 188 each coordinate [4Fe-4S] cluster. Residues Gln-296, Phe-325, Asn-330, Glu-346, Asn-374, and Asp-395 each contribute to the S-adenosyl-L-methionine site. Cys-428 serves as the catalytic Nucleophile.

Belongs to the class I-like SAM-binding methyltransferase superfamily. RNA M5U methyltransferase family. RlmD subfamily.

It carries out the reaction uridine(1939) in 23S rRNA + S-adenosyl-L-methionine = 5-methyluridine(1939) in 23S rRNA + S-adenosyl-L-homocysteine + H(+). Functionally, catalyzes the formation of 5-methyl-uridine at position 1939 (m5U1939) in 23S rRNA. The protein is 23S rRNA (uracil(1939)-C(5))-methyltransferase RlmD of Paraburkholderia xenovorans (strain LB400).